The sequence spans 2065 residues: Cytoskeleton-associated protein 5-A (2065 aa).

TOG stretches follow at residues 1-240 (MGDD…DLKA) and 264-515 (VDAY…KETK). HEAT repeat units follow at residues 120–157 (EKAE…EFGS), 160–197 (MTLK…WIRD), 270–311 (LEAV…NPKI), 314–352 (GDFA…GLRK), 356–393 (SYAG…TTTL), 395–432 (NISE…STLP), and 436–477 (LKPF…VNPF). A disordered region spans residues 500-574 (NGKKGGAAAG…GATAKGKKAV (75 aa)). Low complexity predominate over residues 538-568 (KAAAAPKKAPAAKPGGPVKKAKAPASSGATA). A TOG 3 region spans residues 644–808 (KPGFKETNFQ…LSQIDAEFEK (165 aa)). HEAT repeat units lie at residues 652 to 689 (FQVM…KVGD) and 748 to 785 (INVK…YMGA). The interval 809 to 849 (MKGQTPPVSIRGSKHGSGRDEGEEGEEQDEDAPADVTDLLP) is disordered. A compositionally biased stretch (acidic residues) spans 829–841 (EGEEGEEQDEDAP). A TOG 4 region spans residues 846 to 1090 (DLLPRTDISD…AGPPGKASSK (245 aa)). HEAT repeat units follow at residues 852–889 (DISD…EAKF), 892–929 (PSIG…AMGH), 933–970 (QHVK…QTGM), and 1015–1052 (CVPY…KMSK). A compositionally biased stretch (low complexity) spans 1074–1115 (ASMPAKPAGPPGKASSKQPPAVAQASASPPPAASSDSGSSTS). Residues 1074-1192 (ASMPAKPAGP…AKDEEDKSGP (119 aa)) are disordered. Polar residues predominate over residues 1126–1163 (PGTQASKAKTQSVSSEGNTSLNPSNTSLTPSKANTSLS). The interaction with microtubule lattice stretch occupies residues 1150–1235 (NTSLTPSKAN…IEQLKTQMSP (86 aa)). Residues 1191–1460 (GPIYIIVPNG…ERIKRAGKKQ (270 aa)) form a TOG 5 region. 5 HEAT repeats span residues 1251–1288 (QRQI…RFFD), 1295–1318 (MKCL…LTEM), 1319–1355 (EGTS…VYPA), 1357–1390 (KMFN…SYGM), and 1395–1432 (PTPA…VHGE). Disordered regions lie at residues 1982-2001 (DNAK…KSSA) and 2028-2065 (VELD…SSRK). Residues 2002–2065 (PAVVSSTDML…RLERIKSSRK (64 aa)) form an interaction with tacc3 region. Over residues 2038 to 2048 (STTTSSSASST) the composition is skewed to low complexity. Positions 2051 to 2065 (DDLKKRLERIKSSRK) are enriched in basic and acidic residues.

It belongs to the TOG/XMAP215 family. As to quaternary structure, interacts with tacc3; two molecules of ckap5 interact with 1 molecule of tacc3 probably mediated by coiled coil domains forming a four-helix bundle. Interacts with tacc3 and clathrin forming the TACC3/ch-TOG/clathrin complex located at spindle inter-microtubules bridges. Interacts with ndc80; indicative for an association with the NDC80 comnplex.

The protein resides in the cytoplasm. Its subcellular location is the cytoskeleton. It is found in the spindle pole. It localises to the spindle. The protein localises to the microtubule organizing center. The protein resides in the centrosome. Its subcellular location is the chromosome. It is found in the centromere. It localises to the kinetochore. Binds to the plus end of microtubules and regulates microtubule dynamics and microtubule organization. Acts as a processive microtubule polymerase. Promotes cytoplasmic microtubule nucleation and elongation. Plays a major role in organizing spindle poles. In spindle formation protects kinetochore microtubules from depolymerization by kif2c and has an essential role in centrosomal microtubule assembly independently of kif2c activity. Contributes to centrosome integrity. Acts as a component of the TACC3/ch-TOG/clathrin complex proposed to contribute to stabilization of kinetochore fibers of the mitotic spindle by acting as inter-microtubule bridge. Enhances the strength of NDC80 complex-mediated kinetochore-tip microtubule attachments. The chain is Cytoskeleton-associated protein 5-A (ckap5-a) from Xenopus laevis (African clawed frog).